A 446-amino-acid polypeptide reads, in one-letter code: Phosphoglucosamine mutase (446 aa).

Residue Ser-101 is the Phosphoserine intermediate of the active site. Mg(2+)-binding residues include Ser-101, Asp-240, Asp-242, and Asp-244. Ser-101 is modified (phosphoserine).

It belongs to the phosphohexose mutase family. Mg(2+) serves as cofactor. Activated by phosphorylation.

It carries out the reaction alpha-D-glucosamine 1-phosphate = D-glucosamine 6-phosphate. Catalyzes the conversion of glucosamine-6-phosphate to glucosamine-1-phosphate. This Pseudomonas putida (strain ATCC 700007 / DSM 6899 / JCM 31910 / BCRC 17059 / LMG 24140 / F1) protein is Phosphoglucosamine mutase.